The chain runs to 458 residues: Argininosuccinate lyase (458 aa).

It belongs to the lyase 1 family. Argininosuccinate lyase subfamily.

The protein resides in the cytoplasm. The catalysed reaction is 2-(N(omega)-L-arginino)succinate = fumarate + L-arginine. The protein operates within amino-acid biosynthesis; L-arginine biosynthesis; L-arginine from L-ornithine and carbamoyl phosphate: step 3/3. The chain is Argininosuccinate lyase from Haemophilus ducreyi (strain 35000HP / ATCC 700724).